The following is a 420-amino-acid chain: MPIFSSLNSFLRRHKKKLIVTATLTFSAYFLVNQFIIKKLKNFQNSLRQELFVKEQIKRRFVQTQNDCYLTILALLPVLTQPIINHLPIELITQALKLKKTNSNPTPQEISDSLLTTDNLTMHQNTNDSSDLSHYMSLSKTELWKLLKIKTLTRTLTLMYSISGLLLLTRLQLNILARRSYLESAIILAGGKVNDTETSQDYFIEQSYLSLSWWLLNKGWLKISDLVEKVVTEKFNTINARTELSINKFDDLLCEMVNELSTNHNQEILNAVFPISYDNLIESLLNTNPELIKELDIEDSIMLKLINETTYLVSNEAFGDILINMVDSCKSTLIENLLLSLDPENAYTNQEKVIDISNIKQFKLANLLAQLSIQCGVLCDNNNLMNDTFSNELSGNIYMNNLNEIESLDEFSASIYSNFE.

Residues methionine 1–lysine 16 are Peroxisomal-facing. The helical transmembrane segment at lysine 17–isoleucine 37 threads the bilayer. Residues lysine 38 to glutamate 420 lie on the Cytoplasmic side of the membrane.

Belongs to the peroxin-3 family.

It is found in the peroxisome membrane. Its function is as follows. Involved in peroxisome biosynthesis. The polypeptide is Peroxisomal biogenesis factor 3 (PEX3) (Debaryomyces hansenii (strain ATCC 36239 / CBS 767 / BCRC 21394 / JCM 1990 / NBRC 0083 / IGC 2968) (Yeast)).